We begin with the raw amino-acid sequence, 152 residues long: Large-conductance mechanosensitive channel (152 aa).

Transmembrane regions (helical) follow at residues 14–34 (VIDLAIGVVIGGAFGKIVTSL) and 81–101 (GLFLNNLINFLIIAFSIFIVI).

This sequence belongs to the MscL family. As to quaternary structure, homopentamer.

The protein resides in the cell membrane. In terms of biological role, channel that opens in response to stretch forces in the membrane lipid bilayer. May participate in the regulation of osmotic pressure changes within the cell. In Clostridium perfringens (strain ATCC 13124 / DSM 756 / JCM 1290 / NCIMB 6125 / NCTC 8237 / Type A), this protein is Large-conductance mechanosensitive channel.